The chain runs to 436 residues: GTPase Der (436 aa).

2 consecutive EngA-type G domains span residues 4–167 (PIVA…KEEE) and 176–351 (IRLS…ENHK). GTP contacts are provided by residues 10–17 (GRPNVGKS), 57–61 (DTGGI), 119–122 (NKVD), 182–189 (GRPNVGKS), 229–233 (DTAGM), and 294–297 (NKWD). Residues 352 to 436 (KRVQSSTLNE…PVHIIARKRN (85 aa)) form the KH-like domain.

It belongs to the TRAFAC class TrmE-Era-EngA-EngB-Septin-like GTPase superfamily. EngA (Der) GTPase family. Associates with the 50S ribosomal subunit.

Its function is as follows. GTPase that plays an essential role in the late steps of ribosome biogenesis. The protein is GTPase Der of Staphylococcus saprophyticus subsp. saprophyticus (strain ATCC 15305 / DSM 20229 / NCIMB 8711 / NCTC 7292 / S-41).